The following is a 158-amino-acid chain: Protein E6 (158 aa).

2 zinc fingers span residues 32-68 (CVYC…CQSC) and 105-141 (CMCC…CRHC). A PDZ-binding domain motif is present at residues 156-158 (TQV).

Belongs to the papillomaviridae E6 protein family. In terms of assembly, forms homodimers. Interacts with ubiquitin-protein ligase UBE3A/E6-AP; this interaction stimulates UBE3A ubiquitin activity. Interacts with host BAK1.

It is found in the host cytoplasm. Its subcellular location is the host nucleus. In terms of biological role, plays a major role in the induction and maintenance of cellular transformation. E6 associates with host UBE3A/E6-AP ubiquitin-protein ligase and modulates its activity. Protects host keratinocytes from apoptosis by mediating the degradation of host BAK1. May also inhibit host immune response. The sequence is that of Protein E6 from Homo sapiens (Human).